The chain runs to 427 residues: Acetyl-CoA acetyltransferase, mitochondrial (427 aa).

A mitochondrion-targeting transit peptide spans 1–33 (MAVLAALLRGGARSRSPLLRRLVQEIRYVERSY). Lys-66 is subject to N6-acetyllysine; alternate. Lys-66 is subject to N6-succinyllysine; alternate. Lys-78 carries the post-translational modification N6-succinyllysine. Residue Cys-126 is the Acyl-thioester intermediate of the active site. An N6-acetyllysine; alternate mark is found at Lys-174, Lys-181, Lys-190, and Lys-202. Residues Lys-174, Lys-181, Lys-190, and Lys-202 each carry the N6-succinyllysine; alternate modification. Tyr-219 is a CoA binding site. Tyr-219 is a K(+) binding site. N6-acetyllysine; alternate occurs at positions 223 and 230. N6-succinyllysine; alternate occurs at positions 223 and 230. N6-succinyllysine is present on Lys-243. N6-acetyllysine is present on residues Lys-251 and Lys-257. CoA contacts are provided by residues 258-260 (RVD) and Lys-263. Lys-263 is subject to N6-acetyllysine; alternate. Residue Lys-263 is modified to N6-succinyllysine; alternate. 2 positions are modified to N6-succinyllysine: Lys-266 and Lys-268. Lys-273 is modified (N6-acetyllysine). K(+) contacts are provided by Ala-280, Ala-281, and Ala-283. Ser-284 serves as a coordination point for CoA. Lys-338 is subject to N6-acetyllysine. Val-381 contributes to the K(+) binding site. Catalysis depends on Cys-413, which acts as the Proton donor/acceptor.

The protein belongs to the thiolase-like superfamily. Thiolase family. As to quaternary structure, homotetramer. Post-translationally, succinylation at Lys-268, adjacent to a coenzyme A binding site. Desuccinylated by SIRT5.

It is found in the mitochondrion. The enzyme catalyses 2 acetyl-CoA = acetoacetyl-CoA + CoA. It catalyses the reaction propanoyl-CoA + acetyl-CoA = 2-methyl-3-oxobutanoyl-CoA + CoA. Its pathway is lipid metabolism; fatty acid beta-oxidation. Its activity is regulated as follows. Activated by potassium ions, but not sodium ions. Functionally, this is one of the enzymes that catalyzes the last step of the mitochondrial beta-oxidation pathway, an aerobic process breaking down fatty acids into acetyl-CoA. Using free coenzyme A/CoA, catalyzes the thiolytic cleavage of medium- to long-chain 3-oxoacyl-CoAs into acetyl-CoA and a fatty acyl-CoA shortened by two carbon atoms. The activity of the enzyme is reversible and it can also catalyze the condensation of two acetyl-CoA molecules into acetoacetyl-CoA. Thereby, it plays a major role in ketone body metabolism. This is Acetyl-CoA acetyltransferase, mitochondrial (ACAT1) from Macaca fascicularis (Crab-eating macaque).